The sequence spans 427 residues: Enolase (427 aa).

Gln-163 contacts (2R)-2-phosphoglycerate. Residue Glu-205 is the Proton donor of the active site. Mg(2+) contacts are provided by Asp-242, Glu-285, and Asp-312. (2R)-2-phosphoglycerate-binding residues include Lys-337, Arg-366, Ser-367, and Lys-388. Catalysis depends on Lys-337, which acts as the Proton acceptor.

It belongs to the enolase family. It depends on Mg(2+) as a cofactor.

The protein resides in the cytoplasm. It localises to the secreted. The protein localises to the cell surface. It carries out the reaction (2R)-2-phosphoglycerate = phosphoenolpyruvate + H2O. Its pathway is carbohydrate degradation; glycolysis; pyruvate from D-glyceraldehyde 3-phosphate: step 4/5. Its function is as follows. Catalyzes the reversible conversion of 2-phosphoglycerate (2-PG) into phosphoenolpyruvate (PEP). It is essential for the degradation of carbohydrates via glycolysis. The sequence is that of Enolase from Bradyrhizobium sp. (strain BTAi1 / ATCC BAA-1182).